The primary structure comprises 137 residues: Fluoride-specific ion channel FluC 1 (137 aa).

The next 4 helical transmembrane spans lie at 4–24 (LIYIMVGIAGILGALSRYYLG), 37–57 (LATLLINLAGCFLLAWLTTYI), 67–87 (VITGIGTGFIGSFTTFSTFSV), and 98–118 (WGIAFLYVSCSILGGLIMSGL). 2 residues coordinate Na(+): G77 and T80.

Belongs to the fluoride channel Fluc/FEX (TC 1.A.43) family.

Its subcellular location is the cell membrane. The catalysed reaction is fluoride(in) = fluoride(out). Na(+) is not transported, but it plays an essential structural role and its presence is essential for fluoride channel function. Fluoride-specific ion channel. Important for reducing fluoride concentration in the cell, thus reducing its toxicity. The polypeptide is Fluoride-specific ion channel FluC 1 (Bacillus cereus (strain ZK / E33L)).